A 304-amino-acid polypeptide reads, in one-letter code: uncharacterized protein (304 aa).

Residues T58 and Y121 each act as charge relay system in the active site. Y147 functions as the Proton donor in the catalytic mechanism. K175 serves as the catalytic Schiff-base intermediate with substrate.

The protein belongs to the DapA family. As to quaternary structure, homotetramer.

The protein resides in the cytoplasm. This is an uncharacterized protein from Halobacterium salinarum (strain ATCC 29341 / DSM 671 / R1).